A 474-amino-acid polypeptide reads, in one-letter code: tRNA-2-methylthio-N(6)-dimethylallyladenosine synthase (474 aa).

The 118-residue stretch at 3-120 (KKLHIKTWGC…LPEMINSVRG (118 aa)) folds into the MTTase N-terminal domain. [4Fe-4S] cluster-binding residues include Cys-12, Cys-49, Cys-83, Cys-157, Cys-161, and Cys-164. Positions 143–375 (RAEGPTAFVS…QERINQQAMA (233 aa)) constitute a Radical SAM core domain. Residues 378–441 (RRMLGTTQRI…PNSLRGKVVR (64 aa)) form the TRAM domain.

It belongs to the methylthiotransferase family. MiaB subfamily. In terms of assembly, monomer. Requires [4Fe-4S] cluster as cofactor.

Its subcellular location is the cytoplasm. It carries out the reaction N(6)-dimethylallyladenosine(37) in tRNA + (sulfur carrier)-SH + AH2 + 2 S-adenosyl-L-methionine = 2-methylsulfanyl-N(6)-dimethylallyladenosine(37) in tRNA + (sulfur carrier)-H + 5'-deoxyadenosine + L-methionine + A + S-adenosyl-L-homocysteine + 2 H(+). In terms of biological role, catalyzes the methylthiolation of N6-(dimethylallyl)adenosine (i(6)A), leading to the formation of 2-methylthio-N6-(dimethylallyl)adenosine (ms(2)i(6)A) at position 37 in tRNAs that read codons beginning with uridine. This Shigella boydii serotype 18 (strain CDC 3083-94 / BS512) protein is tRNA-2-methylthio-N(6)-dimethylallyladenosine synthase.